A 122-amino-acid polypeptide reads, in one-letter code: MSKVFGILLYGSYAKNEYTKRSDIDICLVGVDRNTYLEILGKLGNKYDIKIFEELPLYIKMEIIKNHKVIFGDELELSEHFYKFRKIWRDMEKRIRENQFNSVREKVMLRRRFNAKKEEILG.

The GSX(10)DXD motif signature appears at 11–25; that stretch reads GSYAKNEYTKRSDID. 3 residues coordinate Mg(2+): Asp-23, Asp-25, and Asp-48.

This sequence belongs to the MntA antitoxin family. As to quaternary structure, probably forms a complex with cognate toxin MJ1548. Requires Mg(2+) as cofactor.

It carries out the reaction L-tyrosyl-[protein] + ATP = O-(5'-adenylyl)-L-tyrosyl-[protein] + diphosphate. The catalysed reaction is O-(5'-adenylyl)-L-tyrosyl-[protein] + ATP = O-[5'-(adenylyl-(5'-&gt;3')-adenylyl)]-L-tyrosyl-[protein] + diphosphate. Functionally, probable antitoxin component of a putative type VII toxin-antitoxin (TA) system. Neutralizes cognate toxic MJ1548 by di-AMPylation. In Methanocaldococcus jannaschii (strain ATCC 43067 / DSM 2661 / JAL-1 / JCM 10045 / NBRC 100440) (Methanococcus jannaschii), this protein is Putative protein adenylyltransferase MJ1547.